A 218-amino-acid chain; its full sequence is Small ribosomal subunit protein uS3 (218 aa).

Positions 38-106 constitute a KH type-2 domain; the sequence is LRNDLKKKLM…PVHLNIEEVK (69 aa).

Belongs to the universal ribosomal protein uS3 family. In terms of assembly, part of the 30S ribosomal subunit. Forms a tight complex with proteins S10 and S14.

Functionally, binds the lower part of the 30S subunit head. Binds mRNA in the 70S ribosome, positioning it for translation. The protein is Small ribosomal subunit protein uS3 of Legionella pneumophila (strain Paris).